The primary structure comprises 69 residues: Large ribosomal subunit protein uL29 (69 aa).

This sequence belongs to the universal ribosomal protein uL29 family.

The protein is Large ribosomal subunit protein uL29 of Thermoanaerobacter pseudethanolicus (strain ATCC 33223 / 39E) (Clostridium thermohydrosulfuricum).